Reading from the N-terminus, the 99-residue chain is Gibberellin-regulated protein 2 (99 aa).

A signal peptide spans 1-26; that stretch reads MAVFRSTLVLLLIIVCLTTYELHVHA.

It belongs to the GASA family. In terms of processing, six disulfide bonds may be present. In terms of tissue distribution, dry seeds and maturating siliques.

Its subcellular location is the secreted. Its function is as follows. Gibberellin-regulated protein that may function in hormonal controlled steps of development such as seed germination, flowering and seed maturation. This is Gibberellin-regulated protein 2 (GASA2) from Arabidopsis thaliana (Mouse-ear cress).